The following is a 227-amino-acid chain: Enolase-phosphatase E1 (227 aa).

Mg(2+) is bound by residues Asp-11 and Glu-13. Residues 118 to 119 (SS) and Lys-161 contribute to the substrate site. Residue Asp-186 coordinates Mg(2+).

It belongs to the HAD-like hydrolase superfamily. MasA/MtnC family. In terms of assembly, monomer. Requires Mg(2+) as cofactor.

The protein resides in the cytoplasm. It is found in the nucleus. It carries out the reaction 5-methylsulfanyl-2,3-dioxopentyl phosphate + H2O = 1,2-dihydroxy-5-(methylsulfanyl)pent-1-en-3-one + phosphate. It participates in amino-acid biosynthesis; L-methionine biosynthesis via salvage pathway; L-methionine from S-methyl-5-thio-alpha-D-ribose 1-phosphate: step 3/6. Its pathway is amino-acid biosynthesis; L-methionine biosynthesis via salvage pathway; L-methionine from S-methyl-5-thio-alpha-D-ribose 1-phosphate: step 4/6. Functionally, bifunctional enzyme that catalyzes the enolization of 2,3-diketo-5-methylthiopentyl-1-phosphate (DK-MTP-1-P) into the intermediate 2-hydroxy-3-keto-5-methylthiopentenyl-1-phosphate (HK-MTPenyl-1-P), which is then dephosphorylated to form the acireductone 1,2-dihydroxy-3-keto-5-methylthiopentene (DHK-MTPene). This is Enolase-phosphatase E1 from Saccharomyces cerevisiae (strain RM11-1a) (Baker's yeast).